The following is a 432-amino-acid chain: MRNQSSLSDRLTVEVDCSSLGSNECPSMTSSFSPLESPTPTPTSIYSQGSLESPGWHGAGSLPNNTYERTPGSASMRSAFRLAGMASTESLGLPYGSMEGQERMPMPDFLSGYDENIEQLWMPSEAPKSYDHVAQGLAYHQGMHQYPTMARNTNNNYRHQAAAYLPESTTNPCLSRSIFHQPERVPSSMSSSMSMNNMLPWMNLGDSIAPQTIAPSQVGPVTPPPSYTDFPTSLSAFKQHSPTTPIRSCSLGTGSGADTPLSRLSGGPCEYMDDFQPSPVYRDGFQRPHRVASRKMLRRQTSKQNLMLENLPQVIKQVQFKCKEPGCNGRFKRQEHLKRHMKSHSKEKPHVCWVPGCHRAFSRSDNLNAHYTKTHSKRGGRNRYVATLDENSPDYDPEFRGQLTPDGRPIYGSKLDDPIPGAGDMSLDGWDE.

Disordered regions lie at residues 22–72 and 238–260; these read SNEC…RTPG and KQHSPTTPIRSCSLGTGSGADTP. Residues 29 to 44 show a composition bias toward low complexity; it reads TSSFSPLESPTPTPTS. Composition is skewed to polar residues over residues 62–72 and 238–252; these read LPNNTYERTPG and KQHSPTTPIRSCSLG. 2 consecutive C2H2-type zinc fingers follow at residues 320-344 and 350-375; these read FKCKEPGCNGRFKRQEHLKRHMKSH and HVCWVPGCHRAFSRSDNLNAHYTKTH. Residues 388–432 are disordered; sequence LDENSPDYDPEFRGQLTPDGRPIYGSKLDDPIPGAGDMSLDGWDE.

The protein resides in the nucleus. BrlA, abaA and wetA are pivotal regulators of conidiophore development and conidium maturation. They act individually and together to regulate their own expression and that of numerous other sporulation-specific genes. Binds promoters of target genes at brlA response elements (BREs) containing the conserved sequence 5'-(C/A)(A/G)AGGG(G/A)-3'. Controls the expression of the conidiophore-specific phenol oxidase ivoB. Controls the expression of the hydrophobin rodA. Mediates the developmental switch from the indeterminate, apical growth pattern of vegetative cells to the budding growth pattern of conidiophores. Expression of brlA leads to activation of abaA, wetA and stuA, cessation of vegetative growth, cellular vacuolization and spore formation. In Emericella nidulans (strain FGSC A4 / ATCC 38163 / CBS 112.46 / NRRL 194 / M139) (Aspergillus nidulans), this protein is C2H2 type master regulator of conidiophore development brlA.